A 76-amino-acid chain; its full sequence is Large ribosomal subunit protein uL29 (76 aa).

This sequence belongs to the universal ribosomal protein uL29 family.

In Corynebacterium aurimucosum (strain ATCC 700975 / DSM 44827 / CIP 107346 / CN-1) (Corynebacterium nigricans), this protein is Large ribosomal subunit protein uL29.